Here is a 137-residue protein sequence, read N- to C-terminus: Large ribosomal subunit protein uL22 (137 aa).

Belongs to the universal ribosomal protein uL22 family. Part of the 50S ribosomal subunit.

In terms of biological role, this protein binds specifically to 23S rRNA; its binding is stimulated by other ribosomal proteins, e.g. L4, L17, and L20. It is important during the early stages of 50S assembly. It makes multiple contacts with different domains of the 23S rRNA in the assembled 50S subunit and ribosome. The globular domain of the protein is located near the polypeptide exit tunnel on the outside of the subunit, while an extended beta-hairpin is found that lines the wall of the exit tunnel in the center of the 70S ribosome. The chain is Large ribosomal subunit protein uL22 from Flavobacterium johnsoniae (strain ATCC 17061 / DSM 2064 / JCM 8514 / BCRC 14874 / CCUG 350202 / NBRC 14942 / NCIMB 11054 / UW101) (Cytophaga johnsonae).